Here is a 410-residue protein sequence, read N- to C-terminus: Na(+)-translocating NADH-quinone reductase subunit B (410 aa).

3 helical membrane passes run 56 to 76 (MMILVWLALFPAMFYGMYNVG), 119 to 139 (LFGAIYFLPIYATVFIVGGFW), and 159 to 179 (SILFALIVPPTLPLWQAALGI). An FMN phosphoryl threonine modification is found at threonine 232. 5 helical membrane-spanning segments follow: residues 266 to 286 (GSIGEVSTLALLIGGAFIVFA), 293 to 313 (IIAGVMIGMIAMSSLFNFIGS), 318 to 338 (MFAMPWYWHLVVGGFAIGMLF), 347 to 367 (SFTNVGKWWYGALIGVMCVLI), and 377 to 397 (GMMLAILFANLFAPIFDYFVA).

Belongs to the NqrB/RnfD family. As to quaternary structure, composed of six subunits; NqrA, NqrB, NqrC, NqrD, NqrE and NqrF. It depends on FMN as a cofactor.

It is found in the cell inner membrane. It catalyses the reaction a ubiquinone + n Na(+)(in) + NADH + H(+) = a ubiquinol + n Na(+)(out) + NAD(+). NQR complex catalyzes the reduction of ubiquinone-1 to ubiquinol by two successive reactions, coupled with the transport of Na(+) ions from the cytoplasm to the periplasm. NqrA to NqrE are probably involved in the second step, the conversion of ubisemiquinone to ubiquinol. The protein is Na(+)-translocating NADH-quinone reductase subunit B of Neisseria meningitidis serogroup A / serotype 4A (strain DSM 15465 / Z2491).